A 489-amino-acid chain; its full sequence is Dentin matrix acidic phosphoprotein 1 (489 aa).

An N-terminal signal peptide occupies residues 1-16 (MKTVILLTFLWGLSCA). Residues 22–489 (YQNTESESSE…QDDNDCQDGY (468 aa)) are disordered. The span at 82-100 (DKEEDEDDSGDDTFGDEDN) shows a compositional bias: acidic residues. The segment covering 123–138 (DTTQSSEDSTSQENSA) has biased composition (low complexity). 2 stretches are compositionally biased toward basic and acidic residues: residues 143–159 (SDSKDHHSDEADSRPEA) and 217–227 (RSEESKGDHEP). Residues 263 to 274 (DSNSRETQSVST) are compositionally biased toward polar residues. Residues 275-287 (EDFRSKEESRSET) are compositionally biased toward basic and acidic residues. Over residues 316–332 (EPSQESSSESQEGVASE) the composition is skewed to low complexity. A Cell attachment site motif is present at residues 334 to 336 (RGD). Asparagine 340 is a glycosylation site (N-linked (GlcNAc...) asparagine). The segment covering 346–358 (DQRDSESSEEDRL) has biased composition (basic and acidic residues). Asparagine 378 is a glycosylation site (N-linked (GlcNAc...) asparagine). Positions 386-397 (ESQESAQDEDSS) are enriched in acidic residues. A compositionally biased stretch (low complexity) spans 398-419 (SQEGLQSQSASRESRSQESQSE). The segment covering 420–442 (QDSRSEENRDSDSQDSSRSKEES) has biased composition (basic and acidic residues). N-linked (GlcNAc...) asparagine glycosylation is present at asparagine 443. Over residues 453-478 (EDNHPKNIEADNRKLIVDAYHNKPIG) the composition is skewed to basic and acidic residues. Over residues 479 to 489 (DQDDNDCQDGY) the composition is skewed to acidic residues.

In terms of assembly, interacts with importin alpha. Post-translationally, phosphorylated in the cytosol and extracellular matrix and unphosphorylated in the nucleus. Phosphorylation is necessary for nucleocytoplasmic transport and may be catalyzed by a nuclear isoform of CK2 and can be augmented by calcium. Phosphorylated (in vitro) by FAM20C in the extracellular medium at sites within the S-x-E/pS motif. Expressed in tooth particularly in odontoblast and ameloblast.

Its subcellular location is the nucleus. The protein localises to the cytoplasm. It localises to the secreted. The protein resides in the extracellular space. It is found in the extracellular matrix. Functionally, may have a dual function during osteoblast differentiation. In the nucleus of undifferentiated osteoblasts, unphosphorylated form acts as a transcriptional component for activation of osteoblast-specific genes like osteocalcin. During the osteoblast to osteocyte transition phase it is phosphorylated and exported into the extracellular matrix, where it regulates nucleation of hydroxyapatite. The polypeptide is Dentin matrix acidic phosphoprotein 1 (Dmp1) (Rattus norvegicus (Rat)).